The following is a 1713-amino-acid chain: uncharacterized protein (1713 aa).

Over residues 1-12 (MNENEFSTNSLI) the composition is skewed to polar residues. Disordered stretches follow at residues 1–35 (MNENEFSTNSLINQQGTNNNNNNNTNNNITNINFG), 79–200 (QQLN…KLSN), 226–290 (GNNN…QPLS), 309–557 (QYLS…PMSH), 713–734 (SNDQNDRVPIHQLGGATGKKDR), 808–952 (SPPM…SITT), and 1143–1190 (HHHH…SISR). Low complexity-rich tracts occupy residues 13–35 (NQQGTNNNNNNNTNNNITNINFG), 79–109 (QQLNTPPTTPNTSTPSTPTSSRNNNNNNNNN), 126–170 (NNSG…NSGN), 177–200 (NMSDITNDNSNSSSNAGSNSKLSN), and 226–264 (GNNNYHNGNNENGNNTFHVGNNLNNNNNNNNIGSSGGNN). Over residues 265–276 (SHHHHNHSHHNS) the composition is skewed to basic residues. Low complexity-rich tracts occupy residues 317 to 470 (NNIN…SPAS) and 478 to 489 (SNNFGGNHNNYN). Residues 490 to 504 (HAHHSHHNNHAHHNT) are compositionally biased toward basic residues. Over residues 505–553 (HNYNNNNNNNNNNNNNNNNNNNNSNNSNNNSNTNNNGNNGNNSNNNNNH) the composition is skewed to low complexity. A DNA-binding region (NDT80) is located at residues 544–825 (GNNSNNNNNH…QNPGRFLNHD (282 aa)). A compositionally biased stretch (basic and acidic residues) spans 822 to 832 (LNHDKSLKKDP). Positions 838-874 (GGKGGGGSGSGGMGGGMGGGMGNNGSSGSSSNGGYGN) are enriched in gly residues. Composition is skewed to low complexity over residues 898 to 946 (SPTT…PTLT) and 1148 to 1189 (QQQQ…SSIS). The region spanning 1240–1355 (SDQRIKSNIR…RSLKKEKDHI (116 aa)) is the Peptidase S74 domain. The next 3 membrane-spanning stretches (helical) occupy residues 1416–1436 (TMFVFGFFIPICWIIGSFYLF), 1447–1467 (LMNFVATIIFILALSLMTFYV), and 1473–1493 (LIIAPALIVMGFVVCILVGFF). Over residues 1596 to 1605 (NSNNNINNNN) the composition is skewed to low complexity. 2 disordered regions span residues 1596 to 1634 (NSNNNINNNNQERLSDSSKSSFIDDFKKSSSNNHKDFHE) and 1646 to 1665 (IKGKKQSSSSAKTRSLSSSN). Basic and acidic residues predominate over residues 1617-1634 (FIDDFKKSSSNNHKDFHE).

Its subcellular location is the membrane. This is an uncharacterized protein from Dictyostelium discoideum (Social amoeba).